The primary structure comprises 318 residues: L-lactate dehydrogenase (318 aa).

NAD(+) is bound by residues V16, D37, and Y68. Substrate contacts are provided by residues Q85, R91, and 123-126; that span reads NPVD. NAD(+) contacts are provided by residues 121 to 123 and S146; that span reads VAN. 151 to 154 is a substrate binding site; that stretch reads DSAR. Catalysis depends on H178, which acts as the Proton acceptor. Y222 carries the post-translational modification Phosphotyrosine. T231 provides a ligand contact to substrate.

The protein belongs to the LDH/MDH superfamily. LDH family. Homotetramer.

The protein resides in the cytoplasm. It catalyses the reaction (S)-lactate + NAD(+) = pyruvate + NADH + H(+). It participates in fermentation; pyruvate fermentation to lactate; (S)-lactate from pyruvate: step 1/1. Catalyzes the conversion of lactate to pyruvate. The chain is L-lactate dehydrogenase from Mycoplasma mobile (strain ATCC 43663 / 163K / NCTC 11711) (Mesomycoplasma mobile).